We begin with the raw amino-acid sequence, 98 residues long: NADH-ubiquinone oxidoreductase chain 4L (98 aa).

3 helical membrane passes run 1–21 (MSLV…GLLM), 29–49 (SLLC…LTIL), and 61–81 (IILL…LVMV).

It belongs to the complex I subunit 4L family. As to quaternary structure, core subunit of respiratory chain NADH dehydrogenase (Complex I) which is composed of 45 different subunits.

Its subcellular location is the mitochondrion inner membrane. The enzyme catalyses a ubiquinone + NADH + 5 H(+)(in) = a ubiquinol + NAD(+) + 4 H(+)(out). In terms of biological role, core subunit of the mitochondrial membrane respiratory chain NADH dehydrogenase (Complex I) which catalyzes electron transfer from NADH through the respiratory chain, using ubiquinone as an electron acceptor. Part of the enzyme membrane arm which is embedded in the lipid bilayer and involved in proton translocation. The sequence is that of NADH-ubiquinone oxidoreductase chain 4L (MT-ND4L) from Elaphodus cephalophus (Tufted deer).